Consider the following 1052-residue polypeptide: RTX-III toxin determinant A from serotype 8 (1052 aa).

A run of 3 helical transmembrane segments spans residues 248–265 (GLDIISSLLSGVTASFAL), 275–334 (KVAA…LRVA), and 372–418 (DASI…GILE). Hemolysin-type calcium-binding repeat units follow at residues 744 to 761 (KGSKFRDIFHGADGDDLL), 762 to 779 (NGNDGDDILYGDKGNDEL), 780 to 797 (RGDNGNDQLYGGEGNDKL), 798 to 815 (LGGNGNNYLSGGDGNDEL), 826 to 843 (RGGKGDDKLYGSSGSDLL), and 844 to 861 (DGGEGNDYLEGGDGSDFY).

The protein belongs to the RTX prokaryotic toxin (TC 1.C.11) family. Post-translationally, palmitoylated by ApxIIIC. The toxin only becomes active when modified.

Its subcellular location is the secreted. It is found in the host cell membrane. Does not have hemolytic activity but shows a strong cytotoxicity towards alveolar macrophages and neutrophils. This chain is RTX-III toxin determinant A from serotype 8 (apxIIIA), found in Actinobacillus pleuropneumoniae (Haemophilus pleuropneumoniae).